The following is a 257-amino-acid chain: Putative transcription factor R430 (257 aa).

2 disordered regions span residues 1 to 35 (MEKFFITDNTTDNTTDNTTDNTTDNTTDKLTDNNS) and 58 to 77 (SLKSPSDKSSSGKSSIPNKS). Over residues 7-25 (TDNTTDNTTDNTTDNTTDN) the composition is skewed to low complexity. The segment covering 26–35 (TTDKLTDNNS) has biased composition (basic and acidic residues).

This sequence belongs to the nucleo-cytoplasmic large DNA viruses (NCLDVs) VLTF-3 family.

Its function is as follows. Putative transcription factor. The chain is Putative transcription factor R430 from Acanthamoeba polyphaga (Amoeba).